Consider the following 832-residue polypeptide: MSEAGGAGPGGCGAGAGAGAGPGALPPQPAALPPAPPQGSPCAAAAGGSGACGPATAVAAAGTAEGPGGGGSARIAVKKAQLRSAPRAKKLEKLGVYSACKAEESCKCNGWKNPNPSPTPPRADLQQIIVSLTESCRSCSHALAAHVSHLENVSEEEMNRLLGIVLDVEYLFTCVHKEEDADTKQVYFYLFKLLRKSILQRGKPVVEGSLEKKPPFEKPSIEQGVNNFVQYKFSHLPAKERQTIVELAKMFLNRINYWHLEAPSQRRLRSPNDDISGYKENYTRWLCYCNVPQFCDSLPRYETTQVFGRTLLRSVFTVMRRQLLEQARQEKDKLPLEKRTLILTHFPKFLSMLEEEVYSQNSPIWDQDFLSASSRTSQLGIQTVINPPPVAGTISYNSTSSSLEQPNAGSSSPACKASSGLEANPGEKRKMTDSHVLEEAKKPRVMGDIPMELINEVMSTITDPAAMLGPETNFLSAHSARDEAARLEERRGVIEFHVVGNSLNQKPNKKILMWLVGLQNVFSHQLPRMPKEYITRLVFDPKHKTLALIKDGRVIGGICFRMFPSQGFTEIVFCAVTSNEQVKGYGTHLMNHLKEYHIKHDILNFLTYADEYAIGYFKKQGFSKEIKIPKTKYVGYIKDYEGATLMGCELNPRIPYTEFSVIIKKQKEIIKKLIERKQAQIRKVYPGLSCFKDGVRQIPIESIPGIRETGWKPSGKEKSKEPRDPDQLYSTLKSILQQVKSHQSAWPFMEPVKRTEAPGYYEVIRFPMDLKTMSERLKNRYYVSKKLFMADLQRVFTNCKEYNPPESEYYKCANILEKFFFSKIKEAGLIDK.

Gly residues predominate over residues 1 to 22 (MSEAGGAGPGGCGAGAGAGAGP). Disordered stretches follow at residues 1–54 (MSEA…ACGP) and 395–436 (SYNS…DSHV). The segment covering 24 to 39 (ALPPQPAALPPAPPQG) has biased composition (pro residues). Low complexity predominate over residues 40 to 54 (SPCAAAAGGSGACGP). Positions 395 to 413 (SYNSTSSSLEQPNAGSSSP) are enriched in polar residues. Residues 425 to 436 (PGEKRKMTDSHV) are compositionally biased toward basic and acidic residues. An N-acetyltransferase domain is found at 503–651 (LNQKPNKKIL…GATLMGCELN (149 aa)). E570 acts as the Proton donor/acceptor in catalysis. Residues 574–576 (CAV), 581–587 (QVKGYGT), and 612–615 (YAIG) contribute to the acetyl-CoA site. Residues 706–725 (IRETGWKPSGKEKSKEPRDP) are disordered. Positions 714 to 725 (SGKEKSKEPRDP) are enriched in basic and acidic residues. The region spanning 723-827 (RDPDQLYSTL…KFFFSKIKEA (105 aa)) is the Bromo domain.

The protein belongs to the acetyltransferase family. GCN5 subfamily. As to quaternary structure, interacts with SIRT1. Interacts (unsumoylated form) with NR2C1; the interaction promotes transactivation activity. Interacts with EP300, CREBBP and DDX17. Interacts with NCOA1 and NCOA3. Component of a large chromatin remodeling complex, at least composed of MYSM1, KAT2B/PCAF, RBM10 and KIF11/TRIP5. Interacts with NR2C2 (hypophosphorylated and unsumoylated form); the interaction promotes the transactivation activity of NR2C2. Interacts with KLF1; the interaction does not acetylate KLF1 and there is no enhancement of its transactivational activity. Interacts with NFE4. Interacts with MECOM. Interacts with E2F1; the interaction acetylates E2F1 augmenting its DNA-binding and transcriptional activity. Interacts with NPAS2, BMAL1 and CLOCK. Interacts with BCAS3. Interacts with CEBPB. Interacts with NR4A3. Interacts with NFATC2. Interacts with TBX5. Interacts with PLK4. Interacts with RB1; this interaction leads to RB1 acetylation. Interacts with VRK1. (Microbial infection) Interacts with and acetylates HIV-1 Tat. In terms of assembly, (Microbial infection) Interacts with HTLV-1 Tax. As to expression, ubiquitously expressed but most abundant in heart and skeletal muscle. Also expressed in the skin, in keratinocytes (at protein level).

The protein localises to the nucleus. Its subcellular location is the cytoplasm. It is found in the cytoskeleton. It localises to the microtubule organizing center. The protein resides in the centrosome. It carries out the reaction L-lysyl-[histone] + acetyl-CoA = N(6)-acetyl-L-lysyl-[histone] + CoA + H(+). It catalyses the reaction L-lysyl-[protein] + acetyl-CoA = N(6)-acetyl-L-lysyl-[protein] + CoA + H(+). The catalysed reaction is spermidine + acetyl-CoA = N(8)-acetylspermidine + CoA + H(+). Its activity is regulated as follows. Activated in vitro by very low concentrations of spermidine, but inhibited at spermidine concentrations higher than 4 uM. The activating effect of low spermidine concentrations may be mediated by N(8)-acetylspermidine produced by KAT2B/P/CAF itself acting as a positive feedback loop. Functions as a histone acetyltransferase (HAT) to promote transcriptional activation. Has significant histone acetyltransferase activity with core histones (H3 and H4), and also with nucleosome core particles. Has a a strong preference for acetylation of H3 at 'Lys-9' (H3K9ac). Also acetylates non-histone proteins, such as ACLY, MAPRE1/EB1, PLK4, RRP9/U3-55K and TBX5. Inhibits cell-cycle progression and counteracts the mitogenic activity of the adenoviral oncoprotein E1A. Acts as a circadian transcriptional coactivator which enhances the activity of the circadian transcriptional activators: NPAS2-BMAL1 and CLOCK-BMAL1 heterodimers. Involved in heart and limb development by mediating acetylation of TBX5, acetylation regulating nucleocytoplasmic shuttling of TBX5. Acts as a negative regulator of centrosome amplification by mediating acetylation of PLK4. Acetylates RRP9/U3-55K, a core subunit of the U3 snoRNP complex, impairing pre-rRNA processing. Acetylates MAPRE1/EB1, promoting dynamic kinetochore-microtubule interactions in early mitosis. Also acetylates spermidine. In terms of biological role, (Microbial infection) In case of HIV-1 infection, it is recruited by the viral protein Tat. Regulates Tat's transactivating activity and may help inducing chromatin remodeling of proviral genes. The chain is Histone acetyltransferase KAT2B from Homo sapiens (Human).